Here is a 199-residue protein sequence, read N- to C-terminus: MQFEVKDLINKIKKDGLEEAERASNDIILKAKREAEEIVARAEEAARVLKAKSEKEANDYKCHALEASRQAIRDLIIGVEKNLKSLFENALKDNVTEVLSDNNFLAELIIKITDSWAKGEKLVIQLNESDFSSLEQILRLKLGNKLKEGMELRPFRGISKGFKIQKKNIGLHYDFSAETIADILFDYLNPRFKEVIKVV.

It belongs to the V-ATPase E subunit family.

Functionally, produces ATP from ADP in the presence of a proton gradient across the membrane. This Borreliella burgdorferi (strain ATCC 35210 / DSM 4680 / CIP 102532 / B31) (Borrelia burgdorferi) protein is V-type ATP synthase subunit E (atpE).